Reading from the N-terminus, the 494-residue chain is Cytochrome P450 2A7 (494 aa).

A heme-binding site is contributed by C439.

It belongs to the cytochrome P450 family. Requires heme as cofactor.

It localises to the endoplasmic reticulum membrane. The protein resides in the microsome membrane. The catalysed reaction is an organic molecule + reduced [NADPH--hemoprotein reductase] + O2 = an alcohol + oxidized [NADPH--hemoprotein reductase] + H2O + H(+). Functionally, cytochromes P450 are a group of heme-thiolate monooxygenases. In liver microsomes, this enzyme is involved in an NADPH-dependent electron transport pathway. It oxidizes a variety of structurally unrelated compounds, including steroids, fatty acids, and xenobiotics. The chain is Cytochrome P450 2A7 (CYP2A7) from Homo sapiens (Human).